The sequence spans 599 residues: Elongation factor 4 (599 aa).

Positions 4-186 constitute a tr-type G domain; the sequence is DNIRNFSIIA…EIVNKIPPPR (183 aa). GTP-binding positions include 16–21 and 133–136; these read DHGKST and NKID.

Belongs to the TRAFAC class translation factor GTPase superfamily. Classic translation factor GTPase family. LepA subfamily.

The protein localises to the cell inner membrane. It carries out the reaction GTP + H2O = GDP + phosphate + H(+). Its function is as follows. Required for accurate and efficient protein synthesis under certain stress conditions. May act as a fidelity factor of the translation reaction, by catalyzing a one-codon backward translocation of tRNAs on improperly translocated ribosomes. Back-translocation proceeds from a post-translocation (POST) complex to a pre-translocation (PRE) complex, thus giving elongation factor G a second chance to translocate the tRNAs correctly. Binds to ribosomes in a GTP-dependent manner. This Geotalea daltonii (strain DSM 22248 / JCM 15807 / FRC-32) (Geobacter daltonii) protein is Elongation factor 4.